The primary structure comprises 334 residues: Pre-mRNA leakage protein 39 (334 aa).

As to quaternary structure, interacts with MLP1 and MLP2.

The protein localises to the nucleus membrane. Involved in the nuclear retention of improperly spliced pre-mRNAs. This chain is Pre-mRNA leakage protein 39 (PML39), found in Saccharomyces cerevisiae (strain ATCC 204508 / S288c) (Baker's yeast).